A 270-amino-acid chain; its full sequence is Formamidopyrimidine-DNA glycosylase (270 aa).

Pro2 serves as the catalytic Schiff-base intermediate with DNA. The active-site Proton donor is Glu3. The active-site Proton donor; for beta-elimination activity is the Lys56. Positions 89, 107, and 151 each coordinate DNA. The segment at 236 to 270 adopts an FPG-type zinc-finger fold; sequence TVYGRAGEPCRVCATPIRLLRQGQRSTYYCPNCQK. The Proton donor; for delta-elimination activity role is filled by Arg260.

This sequence belongs to the FPG family. As to quaternary structure, monomer. Requires Zn(2+) as cofactor.

The catalysed reaction is Hydrolysis of DNA containing ring-opened 7-methylguanine residues, releasing 2,6-diamino-4-hydroxy-5-(N-methyl)formamidopyrimidine.. The enzyme catalyses 2'-deoxyribonucleotide-(2'-deoxyribose 5'-phosphate)-2'-deoxyribonucleotide-DNA = a 3'-end 2'-deoxyribonucleotide-(2,3-dehydro-2,3-deoxyribose 5'-phosphate)-DNA + a 5'-end 5'-phospho-2'-deoxyribonucleoside-DNA + H(+). Involved in base excision repair of DNA damaged by oxidation or by mutagenic agents. Acts as a DNA glycosylase that recognizes and removes damaged bases. Has a preference for oxidized purines, such as 7,8-dihydro-8-oxoguanine (8-oxoG). Has AP (apurinic/apyrimidinic) lyase activity and introduces nicks in the DNA strand. Cleaves the DNA backbone by beta-delta elimination to generate a single-strand break at the site of the removed base with both 3'- and 5'-phosphates. The protein is Formamidopyrimidine-DNA glycosylase of Variovorax paradoxus (strain S110).